We begin with the raw amino-acid sequence, 131 residues long: Translation initiation factor 5A (131 aa).

Lysine 37 bears the Hypusine mark.

The protein belongs to the eIF-5A family.

The protein resides in the cytoplasm. Functions by promoting the formation of the first peptide bond. This chain is Translation initiation factor 5A (eIF5A), found in Methanococcus maripaludis (strain C6 / ATCC BAA-1332).